The sequence spans 866 residues: Autophagy-related protein 9 (866 aa).

At 1–94 the chain is on the cytoplasmic side; it reads MMSSGHKGPN…KGLWCIIVKW (94 aa). Residues 95-115 form a helical membrane-spanning segment; sequence AVELLSLGFIICFSGFFLLYV. Over 116-153 the chain is Lumenal; sequence DWNGLQNAKCGMDAVESGTKPCDLVKEAIHPHPLSPFT. Residues 154–174 traverse the membrane as a helical segment; it reads LTTAIIVGYLALFSVYWLFCF. Residues 175–319 lie on the Cytoplasmic side of the membrane; it reads LRFFAQLKDT…VSNPTTLKKR (145 aa). The stretch at 320 to 340 is an intramembrane region; the sequence is LFVVGLAMLLLSPFLVIFMLV. Residues 341 to 404 are Cytoplasmic-facing; that stretch reads YLFLRHAEQF…LKQFPSPIIS (64 aa). A helical membrane pass occupies residues 405–425; it reads IIAKFVSFVSGGFAAVLIIIA. Topologically, residues 426–433 are lumenal; that stretch reads FLEESLLE. A helical membrane pass occupies residues 434–454; that stretch reads GHIFGRNLFWYAAVFGTITAI. At 455-507 the chain is on the cytoplasmic side; sequence SRAAISDELLVLDPVGTMSLVVQNTHYMPKRWRGKENKDDVRLELETLFQYTG. An intramembrane segment occupies 508–528; it reads MMLLEEIASIFITPFLLMFVV. Residues 529 to 866 are Cytoplasmic-facing; sequence PKRVDDILQF…ETSTSSTTLR (338 aa). Residues 744–781 are disordered; that stretch reads QPEGEDSYGSQHPLDGRNQWWGRGNHSQISTAHPATTN. Positions 768–781 are enriched in polar residues; sequence NHSQISTAHPATTN.

It belongs to the ATG9 family. As to quaternary structure, homotrimer; forms a homotrimer with a central pore that forms a path between the two membrane leaflets. As to expression, expressed in roots, leaves, stems and flowers.

The protein localises to the preautophagosomal structure membrane. Functionally, phospholipid scramblase involved in autophagy by mediating autophagosomal membrane expansion. Cycles between the preautophagosomal structure/phagophore assembly site (PAS) and the cytoplasmic vesicle pool and supplies membrane for the growing autophagosome. Lipid scramblase activity plays a key role in preautophagosomal structure/phagophore assembly by distributing the phospholipids that arrive through ATG2 from the cytoplasmic to the luminal leaflet of the bilayer, thereby driving autophagosomal membrane expansion. In addition to autophagy, also plays a role in necrotic cell death. Plays an essential role in plant nutrient recycling. The sequence is that of Autophagy-related protein 9 from Arabidopsis thaliana (Mouse-ear cress).